Consider the following 423-residue polypeptide: UPF0229 protein Pput_0430 (423 aa).

Positions 81 to 108 (EFTAGEHIPRPQGGGGGGGRGKAGNSGE) are disordered. A compositionally biased stretch (gly residues) spans 92–107 (QGGGGGGGRGKAGNSG).

The protein belongs to the UPF0229 family.

The protein is UPF0229 protein Pput_0430 of Pseudomonas putida (strain ATCC 700007 / DSM 6899 / JCM 31910 / BCRC 17059 / LMG 24140 / F1).